Consider the following 120-residue polypeptide: NAD(P)H-quinone oxidoreductase subunit 3, chloroplastic (120 aa).

3 consecutive transmembrane segments (helical) span residues 9 to 29 (YFWL…PISS), 64 to 84 (MFAS…PWAM), and 89 to 109 (LGVP…VGSV).

The protein belongs to the complex I subunit 3 family. As to quaternary structure, NDH is composed of at least 16 different subunits, 5 of which are encoded in the nucleus.

Its subcellular location is the plastid. The protein localises to the chloroplast thylakoid membrane. It carries out the reaction a plastoquinone + NADH + (n+1) H(+)(in) = a plastoquinol + NAD(+) + n H(+)(out). It catalyses the reaction a plastoquinone + NADPH + (n+1) H(+)(in) = a plastoquinol + NADP(+) + n H(+)(out). Its function is as follows. NDH shuttles electrons from NAD(P)H:plastoquinone, via FMN and iron-sulfur (Fe-S) centers, to quinones in the photosynthetic chain and possibly in a chloroplast respiratory chain. The immediate electron acceptor for the enzyme in this species is believed to be plastoquinone. Couples the redox reaction to proton translocation, and thus conserves the redox energy in a proton gradient. The polypeptide is NAD(P)H-quinone oxidoreductase subunit 3, chloroplastic (Huperzia lucidula (Shining clubmoss)).